Consider the following 188-residue polypeptide: dCTP deaminase (188 aa).

DCTP contacts are provided by residues 111–116 (KSTYAR), 135–137 (TLE), glutamine 156, tyrosine 170, and glutamine 180. Glutamate 137 acts as the Proton donor/acceptor in catalysis.

It belongs to the dCTP deaminase family. In terms of assembly, homotrimer.

The enzyme catalyses dCTP + H2O + H(+) = dUTP + NH4(+). It functions in the pathway pyrimidine metabolism; dUMP biosynthesis; dUMP from dCTP (dUTP route): step 1/2. Catalyzes the deamination of dCTP to dUTP. This Neisseria meningitidis serogroup C / serotype 2a (strain ATCC 700532 / DSM 15464 / FAM18) protein is dCTP deaminase.